The chain runs to 331 residues: 3-dehydrosphinganine reductase TSC10B (331 aa).

Topologically, residues 1–7 (MAAIFSL) are lumenal. A helical transmembrane segment spans residues 8–28 (FLFFILFIVSLLIILSFIVRP). Topologically, residues 29–262 (RSVTIPIKFR…ICFDGIKAGK (234 aa)) are cytoplasmic. 7 residues coordinate NADPH: glycine 44, serine 46, serine 47, glycine 48, arginine 69, lysine 73, and aspartate 95. The GXSXG motif lies at 44–48 (GGSSG). Residue serine 172 is the Proton donor of the active site. Residue tyrosine 186 is the Proton acceptor of the active site. Residues tyrosine 186 and lysine 190 each coordinate NADP(+). Residue lysine 190 is the Lowers pKa of active site Tyr of the active site. A helical membrane pass occupies residues 263–283 (FTVTCHFIGFLLSIASTGMSP). Over 284 to 286 (QGS) the chain is Lumenal. A helical transmembrane segment spans residues 287-307 (FWLALTEVMFGGLIRLASLVF). Residues 308 to 331 (QWQWYKTIEKWSQRNKKEVNSKLA) lie on the Cytoplasmic side of the membrane.

Belongs to the short-chain dehydrogenases/reductases (SDR) family. In terms of tissue distribution, expressed in roots, leaves, stems and flowers.

The protein resides in the endoplasmic reticulum membrane. The catalysed reaction is sphinganine + NADP(+) = 3-oxosphinganine + NADPH + H(+). Its pathway is lipid metabolism; sphingolipid metabolism. Functionally, catalyzes the reduction of 3'-oxosphinganine (3-ketodihydrosphingosine/KDS) to sphinganine (dihydrosphingosine/DHS), the second step of de novo sphingolipid biosynthesis. In plants, sphingolipids seems to play a critical role in mineral ion homeostasis, most likely through their involvement in the ion transport functionalities of membrane systems in the root. Is stereospecific for D-erythro-DHS production and does not produce L-threo-DHS. The sequence is that of 3-dehydrosphinganine reductase TSC10B (TSC10B) from Arabidopsis thaliana (Mouse-ear cress).